A 216-amino-acid polypeptide reads, in one-letter code: 3-isopropylmalate dehydratase small subunit (216 aa).

The protein belongs to the LeuD family. LeuD type 1 subfamily. Heterodimer of LeuC and LeuD.

The catalysed reaction is (2R,3S)-3-isopropylmalate = (2S)-2-isopropylmalate. It participates in amino-acid biosynthesis; L-leucine biosynthesis; L-leucine from 3-methyl-2-oxobutanoate: step 2/4. Catalyzes the isomerization between 2-isopropylmalate and 3-isopropylmalate, via the formation of 2-isopropylmaleate. This chain is 3-isopropylmalate dehydratase small subunit, found in Polaromonas sp. (strain JS666 / ATCC BAA-500).